Consider the following 463-residue polypeptide: NADH-quinone oxidoreductase subunit N (463 aa).

14 helical membrane-spanning segments follow: residues 5-25 (LLYGLLPEHILLGLILVLMLL), 34-54 (AGSALFIASLLAGAGVLVMQL), 72-92 (FSEIGRLIIVSCGAILGVYSL), 99-119 (KYWILIASSLLGAMIILDSAG), 120-140 (FISLFMGIEILSLPGFALMVL), 154-174 (YLLLSSVATALVLFGLSLVYG), 196-216 (LAASVMILSGFFLKASVFPFH), 230-250 (VTAFLASIVKAAVVLGLVRIL), 259-279 (AVTVIALLSMLSMFYGNITAI), 286-303 (KMLAYSSISHAGYMMFAL), 314-334 (LLYYVAVYAVTTITACACFSI), 356-376 (AILLSLCVLSLAGIPPLPGFL), 393-413 (VAVLAFVASYIGTFFYLGVVL), and 432-452 (LCWTWGGALLGTLALALFMLL).

Belongs to the complex I subunit 2 family. In terms of assembly, NDH-1 is composed of 14 different subunits. Subunits NuoA, H, J, K, L, M, N constitute the membrane sector of the complex.

The protein localises to the cell inner membrane. The catalysed reaction is a quinone + NADH + 5 H(+)(in) = a quinol + NAD(+) + 4 H(+)(out). Functionally, NDH-1 shuttles electrons from NADH, via FMN and iron-sulfur (Fe-S) centers, to quinones in the respiratory chain. The immediate electron acceptor for the enzyme in this species is believed to be ubiquinone. Couples the redox reaction to proton translocation (for every two electrons transferred, four hydrogen ions are translocated across the cytoplasmic membrane), and thus conserves the redox energy in a proton gradient. This is NADH-quinone oxidoreductase subunit N from Pelobacter propionicus (strain DSM 2379 / NBRC 103807 / OttBd1).